The chain runs to 226 residues: ATP synthase subunit a 1 (226 aa).

The next 5 membrane-spanning stretches (helical) occupy residues 20–40 (LTIVTTWAVMLLLAGGSWLIT), 78–98 (YLPFIATLFLFIATANLCTVI), 113–133 (ALALSVFIAVPLFGIAESGLV), 174–194 (MILVILLTISPLVFPVLMNIL), and 196–216 (LLTGMVQAYIFSILATVYIAA).

This sequence belongs to the ATPase A chain family. In terms of assembly, F-type ATPases have 2 components, CF(1) - the catalytic core - and CF(0) - the membrane proton channel. CF(1) has five subunits: alpha(3), beta(3), gamma(1), delta(1), epsilon(1). CF(0) has four main subunits: a, b, b' and c.

The protein localises to the cell inner membrane. Functionally, key component of the proton channel; it plays a direct role in the translocation of protons across the membrane. The sequence is that of ATP synthase subunit a 1 from Chlorobaculum parvum (strain DSM 263 / NCIMB 8327) (Chlorobium vibrioforme subsp. thiosulfatophilum).